The following is a 59-amino-acid chain: UPF0337 protein MM_2677 (59 aa).

Basic and acidic residues-rich tracts occupy residues 1 to 24 (MKEGTKEEMEGKFSKAKGEIKESA) and 33 to 59 (MEAKGEAEKRKGEAQEKVGKIRKEFEK). A disordered region spans residues 1–59 (MKEGTKEEMEGKFSKAKGEIKESAGEMTGDIEMEAKGEAEKRKGEAQEKVGKIRKEFEK).

Belongs to the UPF0337 (CsbD) family.

This chain is UPF0337 protein MM_2677, found in Methanosarcina mazei (strain ATCC BAA-159 / DSM 3647 / Goe1 / Go1 / JCM 11833 / OCM 88) (Methanosarcina frisia).